Consider the following 249-residue polypeptide: Exosome complex component Rrp4 (249 aa).

Residues 73-144 (NDIVIGLVED…RSIDPVLSVK (72 aa)) form the S1 motif domain. Residues 154–211 (GIVIDIMPVKVPRVIGKNKSMYETLTSKSGCSIFVANNGRIWATCPSRFSEEILIEAI) enclose the KH domain.

It belongs to the RRP4 family. Component of the archaeal exosome complex. Forms a trimer of Rrp4 and/or Csl4 subunits. The trimer associates with a hexameric ring-like arrangement composed of 3 Rrp41-Rrp42 heterodimers.

It is found in the cytoplasm. In terms of biological role, non-catalytic component of the exosome, which is a complex involved in RNA degradation. Increases the RNA binding and the efficiency of RNA degradation. Confers strong poly(A) specificity to the exosome. In Saccharolobus solfataricus (strain ATCC 35092 / DSM 1617 / JCM 11322 / P2) (Sulfolobus solfataricus), this protein is Exosome complex component Rrp4.